The sequence spans 374 residues: Nucleosome assembly protein 1;3 (374 aa).

Residues 26 to 80 adopt a coiled-coil conformation; the sequence is VNALKNKLQNLAGQHSDVLENLTPKIRRRVEVLREIQGKHDEIETKFREERAALE. Serine 41 is subject to Phosphoserine. The Nuclear export signal signature appears at 47 to 62; that stretch reads LTPKIRRRVEVLREIQ. Residues 222–227 carry the Nuclear localization signal motif; that stretch reads KKKPKK. Residues 299–339 are compositionally biased toward acidic residues; the sequence is IEGEEFEIDNDDEDDIDEDEDEDEEDEDEDEEEDDEDEEEE. A disordered region spans residues 299–374; that stretch reads IEGEEFEIDN…GERPPECKQQ (76 aa). Residues 343–355 are compositionally biased toward basic residues; sequence TKKKPSVLHKKGG. Over residues 364–374 the composition is skewed to basic and acidic residues; it reads QGERPPECKQQ. The residue at position 371 (cysteine 371) is a Cysteine methyl ester. Cysteine 371 carries S-farnesyl cysteine lipidation. A propeptide spans 372–374 (removed in mature form); sequence KQQ.

It belongs to the nucleosome assembly protein (NAP) family. In terms of assembly, can form homomeric and heteromeric protein complexes with NAP1;1, NAP1;2 and NAP1;4. Binds histone H2A and associates with chromatin in vivo. Ubiquitous.

It is found in the nucleus. It localises to the cytoplasm. May modulate chromatin structure by regulation of nucleosome assembly/disassembly. May function in nucleotide excision repair (NER). Involved in somatic homologous recombination. Could be involved in response to abscisic acid (ABA) and to salt stress. The sequence is that of Nucleosome assembly protein 1;3 (NAP1;3) from Arabidopsis thaliana (Mouse-ear cress).